The sequence spans 144 residues: 3-hydroxyacyl-[acyl-carrier-protein] dehydratase FabZ (144 aa).

Histidine 51 is a catalytic residue.

It belongs to the thioester dehydratase family. FabZ subfamily.

The protein resides in the cytoplasm. The catalysed reaction is a (3R)-hydroxyacyl-[ACP] = a (2E)-enoyl-[ACP] + H2O. In terms of biological role, involved in unsaturated fatty acids biosynthesis. Catalyzes the dehydration of short chain beta-hydroxyacyl-ACPs and long chain saturated and unsaturated beta-hydroxyacyl-ACPs. The polypeptide is 3-hydroxyacyl-[acyl-carrier-protein] dehydratase FabZ (fabZ1) (Enterococcus faecalis (strain ATCC 700802 / V583)).